A 621-amino-acid polypeptide reads, in one-letter code: Chaperone protein HtpG (621 aa).

An a; substrate-binding region spans residues 1–341; sequence MSNQEYTFQT…SEDLPLNVSR (341 aa). The interval 342–547 is b; it reads EILQQNKILA…GDEQNAMMAN (206 aa). Residues 548–621 form a c region; sequence WMRQMGQSVP…RLNSVLLKAL (74 aa).

It belongs to the heat shock protein 90 family. As to quaternary structure, homodimer.

It localises to the cytoplasm. Its function is as follows. Molecular chaperone. Has ATPase activity. This Helicobacter pylori (strain ATCC 700392 / 26695) (Campylobacter pylori) protein is Chaperone protein HtpG.